We begin with the raw amino-acid sequence, 166 residues long: CDP-archaeol synthase (166 aa).

5 helical membrane passes run 7–27 (LLLSILIYLPAFIANGSGPFI), 55–75 (LIVALTFGTTVGVIISKFFTA), 78–98 (TLISFLESLFAMIGDMIGAFI), 116–136 (LDFVLGASLILVLMRVNITWY), and 138–158 (FLFICGLAFFLHQGTNYVAYL).

Belongs to the CDP-archaeol synthase family. Mg(2+) serves as cofactor.

The protein localises to the cell membrane. It catalyses the reaction 2,3-bis-O-(geranylgeranyl)-sn-glycerol 1-phosphate + CTP + H(+) = CDP-2,3-bis-O-(geranylgeranyl)-sn-glycerol + diphosphate. The protein operates within membrane lipid metabolism; glycerophospholipid metabolism. Catalyzes the formation of CDP-2,3-bis-(O-geranylgeranyl)-sn-glycerol (CDP-archaeol) from 2,3-bis-(O-geranylgeranyl)-sn-glycerol 1-phosphate (DGGGP) and CTP. This reaction is the third ether-bond-formation step in the biosynthesis of archaeal membrane lipids. This is CDP-archaeol synthase from Saccharolobus islandicus (strain Y.N.15.51 / Yellowstone #2) (Sulfolobus islandicus).